Consider the following 235-residue polypeptide: Serine protease SplA (235 aa).

The N-terminal stretch at 1–35 (MNKNVMVKGLTALTILTSLGFAENISNQPHSIAKA) is a signal peptide. Active-site charge relay system residues include H74, D113, and S189.

The protein belongs to the peptidase S1B family.

It localises to the secreted. The sequence is that of Serine protease SplA (splA) from Staphylococcus aureus (strain Mu3 / ATCC 700698).